A 409-amino-acid polypeptide reads, in one-letter code: Argininosuccinate synthase (409 aa).

ATP contacts are provided by residues 11–19 (AYSGGLDTS) and Ala38. Residues Tyr91 and Ser96 each contribute to the L-citrulline site. Gly121 serves as a coordination point for ATP. L-aspartate-binding residues include Thr123, Asn127, and Asp128. Asn127 lines the L-citrulline pocket. Positions 131, 182, 191, 267, and 279 each coordinate L-citrulline.

It belongs to the argininosuccinate synthase family. Type 1 subfamily. Homotetramer.

The protein localises to the cytoplasm. It carries out the reaction L-citrulline + L-aspartate + ATP = 2-(N(omega)-L-arginino)succinate + AMP + diphosphate + H(+). The protein operates within amino-acid biosynthesis; L-arginine biosynthesis; L-arginine from L-ornithine and carbamoyl phosphate: step 2/3. The polypeptide is Argininosuccinate synthase (Nitrobacter hamburgensis (strain DSM 10229 / NCIMB 13809 / X14)).